A 287-amino-acid chain; its full sequence is Nucleotide-binding protein VP2673 (287 aa).

An ATP-binding site is contributed by 8 to 15 (GHSGAGKS). 56–59 (DIRN) is a GTP binding site.

Belongs to the RapZ-like family.

Its function is as follows. Displays ATPase and GTPase activities. The chain is Nucleotide-binding protein VP2673 from Vibrio parahaemolyticus serotype O3:K6 (strain RIMD 2210633).